The sequence spans 642 residues: Threonine--tRNA ligase (642 aa).

In terms of domain architecture, TGS spans 1-63 (MNDITVTLPD…YNDARVVIVT (63 aa)). The segment at 242–533 (DHRKIGQELD…LIEHFNGKFP (292 aa)) is catalytic. Residues C334, H385, and H510 each contribute to the Zn(2+) site.

The protein belongs to the class-II aminoacyl-tRNA synthetase family. As to quaternary structure, homodimer. It depends on Zn(2+) as a cofactor.

Its subcellular location is the cytoplasm. The catalysed reaction is tRNA(Thr) + L-threonine + ATP = L-threonyl-tRNA(Thr) + AMP + diphosphate + H(+). Its function is as follows. Catalyzes the attachment of threonine to tRNA(Thr) in a two-step reaction: L-threonine is first activated by ATP to form Thr-AMP and then transferred to the acceptor end of tRNA(Thr). The polypeptide is Threonine--tRNA ligase (Haloquadratum walsbyi (strain DSM 16790 / HBSQ001)).